The primary structure comprises 357 residues: Putative lipopolysaccharide heptosyltransferase 4 (357 aa).

It carries out the reaction alpha-D-Glc-(1-&gt;2)-alpha-D-Glc-(1-&gt;3)-[alpha-D-Gal-(1-&gt;6)]-alpha-D-Glc-(1-&gt;3)-[L-alpha-D-Hep-(1-&gt;7)]-4-O-PO3(2-)-L-alpha-D-Hep-(1-&gt;3)-4-O-PO3(2-)-L-alpha-D-Hep-(1-&gt;5)-[alpha-Kdo-(2-&gt;4)]-alpha-Kdo-(2-&gt;6)-lipid A + ADP-L-glycero-beta-D-manno-heptose = lipid A-core + ADP + H(+). Its pathway is bacterial outer membrane biogenesis; LPS core biosynthesis. Functionally, transferase involved in the biosynthesis of the core oligosaccharide region of lipopolysaccharide (LPS). May catalyze the addition of the terminal heptose (heptose IV) to the outer-core glucose III, the last step of the lipid A-core oligosaccharide biosynthesis. In Escherichia coli (strain K12), this protein is Putative lipopolysaccharide heptosyltransferase 4.